We begin with the raw amino-acid sequence, 466 residues long: Ribulose bisphosphate carboxylase/oxygenase activase, chloroplastic (466 aa).

A chloroplast-targeting transit peptide spans 1-48 (MAAAFSSTVGAPASTPTNFLGKKLKKQVTSAVNYHGKSSNINRFKVMA). 156 to 163 (GGKGQGKS) is a binding site for ATP. The tract at residues 429–454 (QGAQQAGNLPVPEGCTDPVAKNFDPT) is disordered.

This sequence belongs to the RuBisCO activase family.

It localises to the plastid. Its subcellular location is the chloroplast stroma. Activation of RuBisCO (ribulose-1,5-bisphosphate carboxylase/oxygenase; EC 4.1.1.39) involves the ATP-dependent carboxylation of the epsilon-amino group of lysine leading to a carbamate structure. This chain is Ribulose bisphosphate carboxylase/oxygenase activase, chloroplastic (RCA), found in Oryza sativa subsp. japonica (Rice).